We begin with the raw amino-acid sequence, 360 residues long: MPPIPSRARVYAEVNPSRPREYWDYEAHMIEWGQIDDYQLVRKLGRGKYSEVFEGFKMSTDEKVVVKILKPVKKKKIKREIKILENLRGGTNIITLLDVVKDPISRTPALIFEHVNNSDFKQLYQTLSDYDIRYYLYELLKALDFCHSQGIMHRDVKPHNVMIDAEKRELRLIDWGLAEFYHPRQDYNVRVASRYFKGPELLVDYQCYDYSLDMWSLGCMLASMIFRKEPFFHGHDNYDQLVRIAKVLGTDELYEYIARYHIDLDPRFNDILGRHSRKRWERFIHAENQHLVTPEALDFLDKLLRYDHAERLTAQEAMGHEYFRPVVEAHARANGTEQADGQGASNSASSQSSDAKIDGA.

Positions 38 to 323 (YQLVRKLGRG…AQEAMGHEYF (286 aa)) constitute a Protein kinase domain. Residues 44-52 (LGRGKYSEV) and Lys-67 contribute to the ATP site. Asp-155 serves as the catalytic Proton acceptor. A disordered region spans residues 334 to 360 (NGTEQADGQGASNSASSQSSDAKIDGA). Positions 338-354 (QADGQGASNSASSQSSD) are enriched in low complexity.

Belongs to the protein kinase superfamily. Ser/Thr protein kinase family. CK2 subfamily. In terms of assembly, tetramer of two alpha and two beta chains. Expressed in a subset of the adult male sensory neurons: CEM head neurons, ray RnB neurons, and hook HOB tail neurons.

The protein localises to the cell projection. The protein resides in the axon. It is found in the cilium. Its subcellular location is the dendrite. It localises to the perikaryon. It catalyses the reaction L-seryl-[protein] + ATP = O-phospho-L-seryl-[protein] + ADP + H(+). The catalysed reaction is L-threonyl-[protein] + ATP = O-phospho-L-threonyl-[protein] + ADP + H(+). In terms of biological role, casein kinases are operationally defined by their preferential utilization of acidic proteins such as caseins as substrates. The alpha chain contains the catalytic site. May participate in Wnt signaling. Modulates two aspects of male mating behavior; response to hermaphrodite contact and vulval location, acting in the same pathway as lov-1 and pkd-2. This chain is Casein kinase II subunit alpha (kin-3), found in Caenorhabditis elegans.